Consider the following 272-residue polypeptide: HMP-PP phosphatase (272 aa).

Asp-8 (nucleophile) is an active-site residue. Residues Asp-8, Asp-10, and Asp-212 each contribute to the Mg(2+) site.

The protein belongs to the HAD-like hydrolase superfamily. Cof family. Mg(2+) serves as cofactor.

The catalysed reaction is 4-amino-2-methyl-5-(diphosphooxymethyl)pyrimidine + H2O = 4-amino-2-methyl-5-(phosphooxymethyl)pyrimidine + phosphate + H(+). In terms of biological role, catalyzes the hydrolysis of 4-amino-2-methyl-5-hydroxymethylpyrimidine pyrophosphate (HMP-PP) to 4-amino-2-methyl-5-hydroxymethylpyrimidine phosphate (HMP-P). In Salmonella choleraesuis (strain SC-B67), this protein is HMP-PP phosphatase.